Consider the following 235-residue polypeptide: Small ribosomal subunit protein uS3 (235 aa).

One can recognise a KH type-2 domain in the interval 39 to 107 (VRKFLLGQLS…PTKLNISEIR (69 aa)).

The protein belongs to the universal ribosomal protein uS3 family. Part of the 30S ribosomal subunit. Forms a tight complex with proteins S10 and S14.

Its function is as follows. Binds the lower part of the 30S subunit head. Binds mRNA in the 70S ribosome, positioning it for translation. The polypeptide is Small ribosomal subunit protein uS3 (Blochmanniella floridana).